A 401-amino-acid polypeptide reads, in one-letter code: S-adenosylmethionine synthase (401 aa).

Position 16 (His16) interacts with ATP. Position 18 (Asp18) interacts with Mg(2+). Glu44 is a binding site for K(+). L-methionine contacts are provided by Glu57 and Gln100. Residues 100 to 110 (QSPDIAQGVNE) form a flexible loop region. ATP is bound by residues 174–176 (DAK), 241–242 (RF), Asp250, 256–257 (RK), Ala273, and Lys277. Position 250 (Asp250) interacts with L-methionine. Lys281 lines the L-methionine pocket.

This sequence belongs to the AdoMet synthase family. In terms of assembly, homotetramer; dimer of dimers. Mg(2+) is required as a cofactor. It depends on K(+) as a cofactor.

The protein localises to the cytoplasm. The catalysed reaction is L-methionine + ATP + H2O = S-adenosyl-L-methionine + phosphate + diphosphate. It participates in amino-acid biosynthesis; S-adenosyl-L-methionine biosynthesis; S-adenosyl-L-methionine from L-methionine: step 1/1. Its function is as follows. Catalyzes the formation of S-adenosylmethionine (AdoMet) from methionine and ATP. The overall synthetic reaction is composed of two sequential steps, AdoMet formation and the subsequent tripolyphosphate hydrolysis which occurs prior to release of AdoMet from the enzyme. The polypeptide is S-adenosylmethionine synthase (Streptococcus equi subsp. zooepidemicus (strain MGCS10565)).